The sequence spans 188 residues: uncharacterized protein (188 aa).

The helical transmembrane segment at 136–156 threads the bilayer; the sequence is TLVKLLLLFLSLMVVIVGVWW.

It localises to the host membrane. This is an uncharacterized protein from Magallana gigas (Pacific oyster).